Reading from the N-terminus, the 68-residue chain is Large ribosomal subunit protein bL32 (68 aa).

The protein belongs to the bacterial ribosomal protein bL32 family.

This chain is Large ribosomal subunit protein bL32, found in Orientia tsutsugamushi (strain Boryong) (Rickettsia tsutsugamushi).